Consider the following 212-residue polypeptide: ATP synthase F(0) complex subunit a (212 aa).

Transmembrane regions (helical) follow at residues 3–23, 58–78, 87–107, 128–148, 169–189, and 192–212; these read MMGI…IYTS, WAAM…LGLL, QLSM…LTGL, IPLL…ALGV, FVLL…LVLL, and LEIA…TLYL.

Belongs to the ATPase A chain family. Component of the ATP synthase complex composed at least of ATP5F1A/subunit alpha, ATP5F1B/subunit beta, ATP5MC1/subunit c (homooctomer), MT-ATP6/subunit a, MT-ATP8/subunit 8, ATP5ME/subunit e, ATP5MF/subunit f, ATP5MG/subunit g, ATP5MK/subunit k, ATP5MJ/subunit j, ATP5F1C/subunit gamma, ATP5F1D/subunit delta, ATP5F1E/subunit epsilon, ATP5PF/subunit F6, ATP5PB/subunit b, ATP5PD/subunit d, ATP5PO/subunit OSCP. ATP synthase complex consists of a soluble F(1) head domain (subunits alpha(3) and beta(3)) - the catalytic core - and a membrane F(0) domain - the membrane proton channel (subunits c, a, 8, e, f, g, k and j). These two domains are linked by a central stalk (subunits gamma, delta, and epsilon) rotating inside the F1 region and a stationary peripheral stalk (subunits F6, b, d, and OSCP). Interacts with DNAJC30; interaction is direct.

It localises to the mitochondrion inner membrane. It catalyses the reaction H(+)(in) = H(+)(out). Functionally, subunit a, of the mitochondrial membrane ATP synthase complex (F(1)F(0) ATP synthase or Complex V) that produces ATP from ADP in the presence of a proton gradient across the membrane which is generated by electron transport complexes of the respiratory chain. ATP synthase complex consist of a soluble F(1) head domain - the catalytic core - and a membrane F(1) domain - the membrane proton channel. These two domains are linked by a central stalk rotating inside the F(1) region and a stationary peripheral stalk. During catalysis, ATP synthesis in the catalytic domain of F(1) is coupled via a rotary mechanism of the central stalk subunits to proton translocation. With the subunit c (ATP5MC1), forms the proton-conducting channel in the F(0) domain, that contains two crucial half-channels (inlet and outlet) that facilitate proton movement from the mitochondrial intermembrane space (IMS) into the matrix. Protons are taken up via the inlet half-channel and released through the outlet half-channel, following a Grotthuss mechanism. The sequence is that of ATP synthase F(0) complex subunit a from Tropidurus hispidus (Peters' lava lizard).